The chain runs to 119 residues: uncharacterized protein (119 aa).

The protein localises to the mitochondrion. It localises to the nucleus. This is an uncharacterized protein from Schizosaccharomyces pombe (strain 972 / ATCC 24843) (Fission yeast).